The primary structure comprises 325 residues: MDLKEAFATIFDQNRKVALYAAGTTVAVLGLGLVFKYMRREEKLTRVGVVTKLLVHPLKSGKAVSVEAAECLRMGLKYGELRDRHWLVITEDGHMVTGRQQPRLVLVSLTCEGGHVSLNGPQMEELKFPLNNSSDLVVDCRVFSVDVQGRDCGDKVSEWLTRFLEADKPVRLVHYEPDLKPQRPHEKEPLFPKDDEVAYPDAAPVMLMTEASVGDLNSRLDKDLSVFQFRPSIVVSDCEAFTEDTWDHIRIGEVELKRVIGCGRCLFTTVDPETGVFSRKEPLETLKTYRMTDPKQKTSPILGQYYTVRKTGVLHVGEPVYKITY.

The Mitochondrial matrix segment spans residues 1–16 (MDLKEAFATIFDQNRK). Residues 17–36 (VALYAAGTTVAVLGLGLVFK) form a helical; Signal-anchor for type II membrane protein membrane-spanning segment. The Cytoplasmic segment spans residues 37 to 325 (YMRREEKLTR…VGEPVYKITY (289 aa)). Positions 59, 60, and 84 each coordinate Mo-molybdopterin. The tract at residues 85 to 175 (HWLVITEDGH…ADKPVRLVHY (91 aa)) is MOSC N-terminal region. Residues 179–323 (LKPQRPHEKE…LHVGEPVYKI (145 aa)) form the MOSC domain. Positions 230, 264, 265, and 305 each coordinate Mo-molybdopterin.

Requires Mo-molybdopterin as cofactor.

The protein resides in the mitochondrion outer membrane. The protein localises to the membrane. The catalysed reaction is N(omega)-hydroxy-L-arginine + 2 Fe(II)-[cytochrome b5] + 2 H(+) = L-arginine + 2 Fe(III)-[cytochrome b5] + H2O. Catalyzes the reduction of N-oxygenated molecules, acting as a counterpart of cytochrome P450 and flavin-containing monooxygenases in metabolic cycles. As a component of prodrug-converting system, reduces a multitude of N-hydroxylated prodrugs particularly amidoximes, leading to increased drug bioavailability. May be involved in mitochondrial N(omega)-hydroxy-L-arginine (NOHA) reduction, regulating endogenous nitric oxide levels and biosynthesis. Postulated to cleave the N-OH bond of N-hydroxylated substrates in concert with electron transfer from NADH to cytochrome b5 reductase then to cytochrome b5, the ultimate electron donor that primes the active site for substrate reduction. This chain is Mitochondrial amidoxime-reducing component 1 (mtarc1), found in Danio rerio (Zebrafish).